Reading from the N-terminus, the 335-residue chain is Holliday junction branch migration complex subunit RuvB (335 aa).

The interval 2–184 (ADERIVSAEN…FGIVEHMAYY (183 aa)) is large ATPase domain (RuvB-L). Residues Leu23, Arg24, Gly65, Lys68, Thr69, Thr70, 131–133 (EDF), Arg174, Tyr184, and Arg221 each bind ATP. Thr69 contacts Mg(2+). The interval 185 to 255 (TEADLMDIVQ…IADHALSQLQ (71 aa)) is small ATPAse domain (RuvB-S). The head domain (RuvB-H) stretch occupies residues 258–335 (IRGLDGVDRK…AHLGMPYPEK (78 aa)). Arg313 and Arg318 together coordinate DNA.

It belongs to the RuvB family. In terms of assembly, homohexamer. Forms an RuvA(8)-RuvB(12)-Holliday junction (HJ) complex. HJ DNA is sandwiched between 2 RuvA tetramers; dsDNA enters through RuvA and exits via RuvB. An RuvB hexamer assembles on each DNA strand where it exits the tetramer. Each RuvB hexamer is contacted by two RuvA subunits (via domain III) on 2 adjacent RuvB subunits; this complex drives branch migration. In the full resolvosome a probable DNA-RuvA(4)-RuvB(12)-RuvC(2) complex forms which resolves the HJ.

It localises to the cytoplasm. The catalysed reaction is ATP + H2O = ADP + phosphate + H(+). In terms of biological role, the RuvA-RuvB-RuvC complex processes Holliday junction (HJ) DNA during genetic recombination and DNA repair, while the RuvA-RuvB complex plays an important role in the rescue of blocked DNA replication forks via replication fork reversal (RFR). RuvA specifically binds to HJ cruciform DNA, conferring on it an open structure. The RuvB hexamer acts as an ATP-dependent pump, pulling dsDNA into and through the RuvAB complex. RuvB forms 2 homohexamers on either side of HJ DNA bound by 1 or 2 RuvA tetramers; 4 subunits per hexamer contact DNA at a time. Coordinated motions by a converter formed by DNA-disengaged RuvB subunits stimulates ATP hydrolysis and nucleotide exchange. Immobilization of the converter enables RuvB to convert the ATP-contained energy into a lever motion, pulling 2 nucleotides of DNA out of the RuvA tetramer per ATP hydrolyzed, thus driving DNA branch migration. The RuvB motors rotate together with the DNA substrate, which together with the progressing nucleotide cycle form the mechanistic basis for DNA recombination by continuous HJ branch migration. Branch migration allows RuvC to scan DNA until it finds its consensus sequence, where it cleaves and resolves cruciform DNA. The polypeptide is Holliday junction branch migration complex subunit RuvB (Latilactobacillus sakei subsp. sakei (strain 23K) (Lactobacillus sakei subsp. sakei)).